The sequence spans 517 residues: Cytochrome P450 52A8 (517 aa).

C464 contacts heme.

Belongs to the cytochrome P450 family. Heme is required as a cofactor.

Functionally, together with an NADPH cytochrome P450 the enzyme system catalyzes the terminal hydroxylation as the first step in the assimilation of alkanes and fatty acids. Preferentially hydroxylates lauric acid. This is Cytochrome P450 52A8 (CYP52A8) from Candida tropicalis (Yeast).